The sequence spans 371 residues: Flagellar P-ring protein (371 aa).

The first 25 residues, 1 to 25 (MKMRACKWLLTLAVAFAATLSSAYA), serve as a signal peptide directing secretion.

Belongs to the FlgI family. In terms of assembly, the basal body constitutes a major portion of the flagellar organelle and consists of four rings (L,P,S, and M) mounted on a central rod.

The protein localises to the periplasm. Its subcellular location is the bacterial flagellum basal body. Its function is as follows. Assembles around the rod to form the L-ring and probably protects the motor/basal body from shearing forces during rotation. The polypeptide is Flagellar P-ring protein (Sinorhizobium medicae (strain WSM419) (Ensifer medicae)).